A 513-amino-acid polypeptide reads, in one-letter code: ATP synthase subunit alpha (513 aa).

169-176 (GDRQTGKT) lines the ATP pocket.

It belongs to the ATPase alpha/beta chains family. As to quaternary structure, F-type ATPases have 2 components, CF(1) - the catalytic core - and CF(0) - the membrane proton channel. CF(1) has five subunits: alpha(3), beta(3), gamma(1), delta(1), epsilon(1). CF(0) has three main subunits: a(1), b(2) and c(9-12). The alpha and beta chains form an alternating ring which encloses part of the gamma chain. CF(1) is attached to CF(0) by a central stalk formed by the gamma and epsilon chains, while a peripheral stalk is formed by the delta and b chains.

The protein resides in the cell inner membrane. The catalysed reaction is ATP + H2O + 4 H(+)(in) = ADP + phosphate + 5 H(+)(out). Functionally, produces ATP from ADP in the presence of a proton gradient across the membrane. The alpha chain is a regulatory subunit. This Cronobacter sakazakii (strain ATCC BAA-894) (Enterobacter sakazakii) protein is ATP synthase subunit alpha.